A 138-amino-acid polypeptide reads, in one-letter code: Large ribosomal subunit protein uL16 (138 aa).

The span at 1–21 shows a compositional bias: basic residues; that stretch reads MLIPRKVKHRKQHHPSLRGRA. The tract at residues 1–22 is disordered; that stretch reads MLIPRKVKHRKQHHPSLRGRAK.

Belongs to the universal ribosomal protein uL16 family. Part of the 50S ribosomal subunit.

In terms of biological role, binds 23S rRNA and is also seen to make contacts with the A and possibly P site tRNAs. This chain is Large ribosomal subunit protein uL16, found in Thermobifida fusca (strain YX).